A 138-amino-acid chain; its full sequence is Ribosome-binding factor A (138 aa).

A disordered region spans residues 112–138 (EARTQGQEPAADVEPAPGAAPDDEAEE). Residues 119 to 131 (EPAADVEPAPGAA) are compositionally biased toward low complexity.

The protein belongs to the RbfA family. As to quaternary structure, monomer. Binds 30S ribosomal subunits, but not 50S ribosomal subunits or 70S ribosomes.

It localises to the cytoplasm. In terms of biological role, one of several proteins that assist in the late maturation steps of the functional core of the 30S ribosomal subunit. Associates with free 30S ribosomal subunits (but not with 30S subunits that are part of 70S ribosomes or polysomes). Required for efficient processing of 16S rRNA. May interact with the 5'-terminal helix region of 16S rRNA. The chain is Ribosome-binding factor A from Anaeromyxobacter dehalogenans (strain 2CP-C).